A 299-amino-acid polypeptide reads, in one-letter code: MWFKNLQVHRFSAPWSLSADEVEASLAKHAFFPGTSLEMQTQGWASPRDNGQLVHTVGGQMLLTLRTEKKLLPTTVVNQVTRARAAEIEEQQGYKPGRKQMKELKEQVTEELLPRAFSIRRDTRVWIDPDNGWLAIDAAATAKADEVRGMLFKALDPLPLINLHVNQSPVAAMTEWLAGDAAPGGFTVDQEIELQSGAESKATVRYVRHPLDPEDLRRHIAAGKRCTRLAMTWNDRVSFVLTDGLVVKKVAPLDVIKEQADGTAHDEDERFDADFTMMAGELSGMLGDLTEALGGERKA.

This sequence belongs to the RdgC family.

It localises to the cytoplasm. The protein localises to the nucleoid. In terms of biological role, may be involved in recombination. This is Recombination-associated protein RdgC from Cupriavidus necator (strain ATCC 17699 / DSM 428 / KCTC 22496 / NCIMB 10442 / H16 / Stanier 337) (Ralstonia eutropha).